The chain runs to 483 residues: Regulatory protein ViaA (483 aa).

The protein belongs to the ViaA family. In terms of assembly, homodimer. Interacts with RavA.

Its subcellular location is the cytoplasm. Component of the RavA-ViaA chaperone complex, which may act on the membrane to optimize the function of some of the respiratory chains. ViaA stimulates the ATPase activity of RavA. The chain is Regulatory protein ViaA from Salmonella choleraesuis (strain SC-B67).